The sequence spans 1097 residues: Leukemia inhibitory factor receptor (1097 aa).

The signal sequence occupies residues 1–44; it reads MMNISLRLRRPPWMVDSNGRRMTSHFQWLLLTFILLYLMNQVTS. Topologically, residues 45 to 833 are extracellular; sequence EKRGAPRDLK…SMFVVTKENS (789 aa). The Fibronectin type-III 1 domain maps to 46 to 131; sequence KRGAPRDLKC…ISKFTLNEKN (86 aa). 2 disulfides stabilise this stretch: cysteine 55–cysteine 65 and cysteine 82–cysteine 90. 6 N-linked (GlcNAc...) asparagine glycosylation sites follow: asparagine 85, asparagine 131, asparagine 143, asparagine 191, asparagine 243, and asparagine 303. A disulfide bridge connects residues cysteine 213 and cysteine 270. Fibronectin type-III domains are found at residues 332–434, 435–534, 538–629, 627–719, and 724–833; these read PPDI…VYPR, IPTS…TEAI, GPDT…IPND, PNDD…IGYI, and PIVA…KENS. A disulfide bridge connects residues cysteine 341 and cysteine 351. N-linked (GlcNAc...) asparagine glycans are attached at residues asparagine 366, asparagine 390, asparagine 407, asparagine 426, asparagine 445, asparagine 471, asparagine 481, and asparagine 489. Residues cysteine 466 and cysteine 511 are joined by a disulfide bond. The WSXWS motif motif lies at 519–523; sequence WSKWS. 6 N-linked (GlcNAc...) asparagine glycosylation sites follow: asparagine 572, asparagine 652, asparagine 663, asparagine 680, asparagine 729, and asparagine 787. The helical transmembrane segment at 834–854 threads the bilayer; the sequence is VGLIIAILIPVAVAVIVGVVT. The Cytoplasmic segment spans residues 855 to 1097; it reads SILCYRKREW…TNFFQNKPND (243 aa). Positions 869–877 match the Box 1 motif motif; that stretch reads FYPDIPNPE. Residue serine 927 is modified to Phosphoserine. Disordered stretches follow at residues 982-1005 and 1022-1097; these read QPQA…KPQM and LDKA…KPND. Polar residues-rich tracts occupy residues 1032–1067 and 1086–1097; these read ANVN…NSRQ and SFTNFFQNKPND. Serine 1044 carries the phosphoserine modification.

The protein belongs to the type I cytokine receptor family. Type 2 subfamily. As to quaternary structure, heterodimer composed of LIFR and IL6ST. The heterodimer formed by LIFR and IL6ST interacts with the complex formed by CNTF and CNTFR.

The protein resides in the cell membrane. Its function is as follows. Signal-transducing molecule. May have a common pathway with IL6ST. The soluble form inhibits the biological activity of LIF by blocking its binding to receptors on target cells. This Canis lupus familiaris (Dog) protein is Leukemia inhibitory factor receptor (LIFR).